A 254-amino-acid chain; its full sequence is Alcohol dehydrogenase 1 (254 aa).

NAD(+) is bound at residue 10–33 (FVAGLGGIGFDTSREIVKSGPKNL). Residue serine 138 coordinates substrate. The active-site Proton acceptor is the tyrosine 151.

This sequence belongs to the short-chain dehydrogenases/reductases (SDR) family. Homodimer.

The catalysed reaction is a primary alcohol + NAD(+) = an aldehyde + NADH + H(+). It catalyses the reaction a secondary alcohol + NAD(+) = a ketone + NADH + H(+). The protein is Alcohol dehydrogenase 1 (Adh1) of Drosophila navojoa (Fruit fly).